Here is a 425-residue protein sequence, read N- to C-terminus: Glutamyl-tRNA(Gln) amidotransferase subunit D (425 aa).

The interval 53-84 (ENNGEAANGGNGGKNGQKEPEPAKEKVSKPGL) is disordered. The span at 68–80 (GQKEPEPAKEKVS) shows a compositional bias: basic and acidic residues. The 330-residue stretch at 85–414 (PKVSILSTGG…EKAVSMLGEN (330 aa)) folds into the Asparaginase/glutaminase domain. Active-site residues include Thr95, Thr171, Asp172, and Lys248.

The protein belongs to the asparaginase 1 family. GatD subfamily. In terms of assembly, heterodimer of GatD and GatE.

The catalysed reaction is L-glutamyl-tRNA(Gln) + L-glutamine + ATP + H2O = L-glutaminyl-tRNA(Gln) + L-glutamate + ADP + phosphate + H(+). In terms of biological role, allows the formation of correctly charged Gln-tRNA(Gln) through the transamidation of misacylated Glu-tRNA(Gln) in organisms which lack glutaminyl-tRNA synthetase. The reaction takes place in the presence of glutamine and ATP through an activated gamma-phospho-Glu-tRNA(Gln). The GatDE system is specific for glutamate and does not act on aspartate. The chain is Glutamyl-tRNA(Gln) amidotransferase subunit D from Methanosarcina mazei (strain ATCC BAA-159 / DSM 3647 / Goe1 / Go1 / JCM 11833 / OCM 88) (Methanosarcina frisia).